Here is a 525-residue protein sequence, read N- to C-terminus: GMP synthase [glutamine-hydrolyzing] (525 aa).

The Glutamine amidotransferase type-1 domain occupies 16–205 (PVLVVDFGAQ…LHDFAGLGAQ (190 aa)). Cys93 functions as the Nucleophile in the catalytic mechanism. Residues His179 and Glu181 contribute to the active site. In terms of domain architecture, GMPS ATP-PPase spans 206-399 (WTPANIANAL…LGLPEEIVAR (194 aa)). Residue 233–239 (SGGVDSA) coordinates ATP.

In terms of assembly, homodimer.

The enzyme catalyses XMP + L-glutamine + ATP + H2O = GMP + L-glutamate + AMP + diphosphate + 2 H(+). It participates in purine metabolism; GMP biosynthesis; GMP from XMP (L-Gln route): step 1/1. In terms of biological role, catalyzes the synthesis of GMP from XMP. This chain is GMP synthase [glutamine-hydrolyzing] (guaA), found in Mycobacterium tuberculosis (strain CDC 1551 / Oshkosh).